The sequence spans 240 residues: Coat protein (240 aa).

Residues 1–10 are compositionally biased toward polar residues; sequence MATPSTQTTD. A disordered region spans residues 1–27; the sequence is MATPSTQTTDPKPANADLSDPNRAPSL.

It belongs to the potexvirus capsid protein family.

It is found in the virion. In terms of biological role, required for genome encapsidation. Forms ribonucleoprotein complexes along with TGB1 helicase and viral RNA. The sequence is that of Coat protein from Narcissus pseudonarcissus (Daffodil).